A 380-amino-acid polypeptide reads, in one-letter code: Enoyl-[acyl-carrier-protein] reductase, mitochondrial (380 aa).

Residues 1–9 constitute a mitochondrion transit peptide; it reads MLPTFKRYM. The active-site Proton donor is the Tyr-73. NADP(+) contacts are provided by residues Asn-157, 185–188, 208–210, 283–286, and 308–310; these read TSSV, RDR, YGGM, and YWV. Ser-339 carries the post-translational modification Phosphoserine. An NADP(+)-binding site is contributed by Lys-373.

This sequence belongs to the zinc-containing alcohol dehydrogenase family. Quinone oxidoreductase subfamily. Homodimer or in a complex with other proteins. Interacts with ARS1.

The protein resides in the mitochondrion matrix. It catalyses the reaction a 2,3-saturated acyl-[ACP] + NADP(+) = a (2E)-enoyl-[ACP] + NADPH + H(+). It carries out the reaction (2E,4E)-hexadienoyl-CoA + NADPH + H(+) = (4E)-hexenoyl-CoA + NADP(+). The enzyme catalyses (2E)-hexenoyl-CoA + NADPH + H(+) = hexanoyl-CoA + NADP(+). Its function is as follows. Catalyzes the NADPH-dependent reduction of trans-2-enoyl thioesters in mitochondrial fatty acid synthesis (fatty acid synthesis type II). Fatty acid chain elongation in mitochondria uses acyl carrier protein (ACP) as an acyl group carrier, but the enzyme accepts both ACP and CoA thioesters as substrates in vitro. Required for respiration and the maintenance of the mitochondrial compartment. The polypeptide is Enoyl-[acyl-carrier-protein] reductase, mitochondrial (ETR1) (Saccharomyces cerevisiae (strain ATCC 204508 / S288c) (Baker's yeast)).